A 589-amino-acid polypeptide reads, in one-letter code: Proline--tRNA ligase (589 aa).

It belongs to the class-II aminoacyl-tRNA synthetase family. ProS type 1 subfamily. As to quaternary structure, homodimer.

It localises to the cytoplasm. It catalyses the reaction tRNA(Pro) + L-proline + ATP = L-prolyl-tRNA(Pro) + AMP + diphosphate. In terms of biological role, catalyzes the attachment of proline to tRNA(Pro) in a two-step reaction: proline is first activated by ATP to form Pro-AMP and then transferred to the acceptor end of tRNA(Pro). As ProRS can inadvertently accommodate and process non-cognate amino acids such as alanine and cysteine, to avoid such errors it has two additional distinct editing activities against alanine. One activity is designated as 'pretransfer' editing and involves the tRNA(Pro)-independent hydrolysis of activated Ala-AMP. The other activity is designated 'posttransfer' editing and involves deacylation of mischarged Ala-tRNA(Pro). The misacylated Cys-tRNA(Pro) is not edited by ProRS. This chain is Proline--tRNA ligase, found in Nocardioides sp. (strain ATCC BAA-499 / JS614).